Reading from the N-terminus, the 224-residue chain is DNA repair and recombination protein RadB (224 aa).

This sequence belongs to the eukaryotic RecA-like protein family. RadB subfamily.

In terms of biological role, involved in DNA repair and in homologous recombination. May regulate the cleavage reactions of the branch-structured DNA. Has a very weak ATPase activity that is not stimulated by DNA. Binds DNA but does not promote DNA strands exchange. The sequence is that of DNA repair and recombination protein RadB from Thermococcus onnurineus (strain NA1).